Consider the following 461-residue polypeptide: uncharacterized protein (461 aa).

13 helical membrane passes run 13–33 (GIIF…LPFE), 54–74 (ALHV…LGLV), 81–101 (VGFA…ATAL), 120–140 (GNLF…SMWM), 170–190 (VFVL…TLVG), 211–231 (YGLP…YIIF), 256–276 (FIIF…NPFI), 286–306 (IASF…STGV), 314–334 (SNTD…SAVL), 349–369 (FMID…FIIF), 377–397 (TASA…LGMP), 399–419 (IGLA…PVAT), and 439–459 (VGFL…YMFW).

This sequence belongs to the SLC13A/DASS transporter (TC 2.A.47) family. NADC subfamily.

The protein localises to the cell membrane. This is an uncharacterized protein from Haemophilus influenzae (strain ATCC 51907 / DSM 11121 / KW20 / Rd).